Reading from the N-terminus, the 607-residue chain is Rap1 GTPase-GDP dissociation stimulator 1 (607 aa).

ARM repeat units lie at residues 89–131 (GLIS…DQAG) and 170–211 (DSLQ…NLAE). The interval 122–170 (EGRSAVDQAGGAQIVIDHLRSLCGRTDPASEKLMTVFCGMLMNYSNEND) is prevents binding to prenylated RHOA. At K230 the chain carries N6-acetyllysine. ARM repeat units follow at residues 347 to 390 (DGNC…NLAI), 391 to 431 (PVVN…MLID), and 479 to 519 (SKDV…LIAA).

In terms of assembly, interacts with RABL3. Interacts with RHOT1. As to quaternary structure, interacts with unprenylated RHOA; the interaction is direct. Interacts with RAP1A. Interacts with KRAS. Interacts with RAC1. Interacts with RAP1B. Preferentially interacts with unprenylated GTPases that will become geranylgeranylated. May also interact with prenylated GTPases. Interacts with prenylated RHOA; the interaction is direct and in a 1:1 stoichiometry. Interacts with RAP1A. Interacts with KRAS. Interacts with RAC1. Interacts with RAP1B. Preferentially interacts with prenylated GTPases. Post-translationally, serotonylated on Gln residues by TGM2 in response to hypoxia, leading to its inactivation.

It localises to the cytoplasm. Its subcellular location is the cytosol. The protein resides in the endoplasmic reticulum. The protein localises to the mitochondrion. It is found in the nucleus. Functionally, acts as a GEF (guanine nucleotide exchange factor) for the Rho family of small GTP-binding proteins (G proteins) that stimulates the dissociation of GDP to enable subsequent binding of GTP. Additionally, appears to chaperone the processing and/or trafficking of small GTPases containing a C-terminal polybasic region independently of GEF activity. Targets include RAP1A/RAP1B, RHOA, RHOB, RHOC, RAC1 and KRAS. Regulates mitochondrial dynamics by controlling RHOT function to promote mitochondrial fission during high calcium conditions. Able to promote the Ca(2+) release from the endoplasmic reticulum via both inositol trisphosphate (Ins3P) and ryanodine sensitive receptors leading to a enhanced mitochondrial Ca(2+) uptake. In terms of biological role, acts as a GEF (guanine nucleotide exchange factor) for unprenylated RHOA. Chaperones the entry and passage of small GTPases through the prenylation pathway. Recognizes the last amino acid in the GTPase C-terminal CAAX motif with a preference for 'Leu' over 'Met', indicating involvement in the geranylgeranylation pathway. May also recognize prenylated GTPases. Acts as a GEF (guanine nucleotide exchange factor) for prenylated RHOA. Acts as a GEF for RHOC. Chaperones the downstream trafficking and/or processing of small newly prenylated GTPases. Escorts RAC1 to the nucleus. The chain is Rap1 GTPase-GDP dissociation stimulator 1 from Mus musculus (Mouse).